Consider the following 588-residue polypeptide: MSTVTFENIFHGDSADLGKLRFNPVGFGWKAYQSEDNNPTTYNGSDIRHATWFRVARHFQLRLGMRNSEKPRISFDGFKRDDLDKIKRTLQEYFNITLETRDTSLKGWNWGEAQVKGSDLVFQVQGKTAFDVPLSQVANSNIAGKYEVALEFNPPSNYKFDPKDLNKRPPDEMVEMRFYIPGKSMKKAGSDAGSGGEETELDEEGNEVSAADAFHSLIKEKADIGAVVGDSIVVFEDCLILTPRGRFSIEVYADSIRLVGKSTDHRVPFTSIHRIFLLPKLDDLHVQLVLGLDPPIRQGATRYPFLVAQWPKDEVVNAELNLTDEELAQYPDLEKTYEATTFQVVSRVLKALTGKKVTPPGSLRNAQGLNGIRANVKAVQGELYFLEKGLIFISKQPILIDFSKTDSISFSRVGGGVASARTFDMRVVSKTGGADHVFSAINKQEVGPISSFLQSKNIRLKNEMEEAIVDIDEPFSDDDEEMESPSEDERPSKAKNDKSKTKPVKKAADDDEDESDDEDFEDESSDGGSPSESDSDDDSGMASDASDPMMEELRKKTQAKRTKAKETSGSGSEDEKPKKKKAKKDDDE.

Disordered stretches follow at residues 185–205 and 469–588; these read MKKA…DEEG and VDID…DDDE. Over residues 469-486 the composition is skewed to acidic residues; it reads VDIDEPFSDDDEEMESPS. The segment covering 487–500 has biased composition (basic and acidic residues); that stretch reads EDERPSKAKNDKSK. Acidic residues predominate over residues 509–525; it reads DDDEDESDDEDFEDESS. Over residues 573 to 588 the composition is skewed to basic and acidic residues; the sequence is EDEKPKKKKAKKDDDE.

The protein belongs to the SSRP1 family. Forms a stable heterodimer with SPT16. The SPT16-POB3 dimer weakly associates with multiple molecules of NHP6 to form the FACT complex.

It is found in the nucleus. The protein resides in the chromosome. In terms of biological role, component of the FACT complex, a general chromatin factor that acts to reorganize nucleosomes. The FACT complex is involved in multiple processes that require DNA as a template such as mRNA elongation, DNA replication and DNA repair. During transcription elongation the FACT complex acts as a histone chaperone that both destabilizes and restores nucleosomal structure. It facilitates the passage of RNA polymerase II and transcription by promoting the dissociation of one histone H2A-H2B dimer from the nucleosome, then subsequently promotes the reestablishment of the nucleosome following the passage of RNA polymerase II. In Cryptococcus neoformans var. neoformans serotype D (strain B-3501A) (Filobasidiella neoformans), this protein is FACT complex subunit POB3 (POB3).